An 899-amino-acid chain; its full sequence is Ewing's tumor-associated antigen 1 homolog (899 aa).

Residues 1-82 (MSRRRKHGDS…TEERYETPKR (82 aa)) form a disordered region. The span at 71-81 (SNTEERYETPK) shows a compositional bias: basic and acidic residues. An ATR-activation domain (AAD) motif is present at residues 105 to 111 (IFWDQNS). Residues 180–210 (TKLKSQNQEEELMKLAKQFDKNMEELDVIQE) adopt a coiled-coil conformation. Residues Lys-416 and Lys-444 each participate in a glycyl lysine isopeptide (Lys-Gly) (interchain with G-Cter in SUMO2) cross-link. Ser-467 is modified (phosphoserine). Residues Lys-485 and Lys-539 each participate in a glycyl lysine isopeptide (Lys-Gly) (interchain with G-Cter in SUMO2) cross-link. Residues 607–622 (DDVDDDILYQACDDIE) carry the RBM1 motif motif. A Phosphoserine modification is found at Ser-810. Residues 833–899 (NKTVNPLPGK…AQASSVKKGR (67 aa)) form a disordered region. Residues 859–877 (PSKEEEEKNRKCSPEEIQR) are compositionally biased toward basic and acidic residues. An RBM2 motif motif is present at residues 868-890 (RKCSPEEIQRKRQAALIRRMAKA).

As to quaternary structure, interacts (via RBM1 motif) with RPA1. Interacts (via RBM2 motif) with RPA2. Interacts (via the ATR-activation domain motif) with ATR. Post-translationally, phosphorylated by ATR.

It localises to the nucleus. In terms of biological role, replication stress response protein that accumulates at DNA damage sites and promotes replication fork progression and integrity. Recruited to stalled replication forks via interaction with the RPA complex and directly stimulates ATR kinase activity independently of TOPBP1. Probably only regulates a subset of ATR targets. This is Ewing's tumor-associated antigen 1 homolog from Bos taurus (Bovine).